The following is a 177-amino-acid chain: MSNKAPVEPIVLGKMGSCYGIRGWLRVFSSTEDAESIFDYQPWFIQKGGKWEEVELESWRRHNQDIVIKLKGVEDRDAANLLTNCEIVVDSSQLPKLDDGYYWKDLMGCQVVTTEGYELGKVIDMMETGSNDVLVIKANLKDAFGIKERLVPFLDGQVIKKVDLTTRTIEVDWDPGF.

The region spanning 98-177 (DDGYYWKDLM…TIEVDWDPGF (80 aa)) is the PRC barrel domain.

This sequence belongs to the RimM family. Binds ribosomal protein uS19.

The protein localises to the cytoplasm. Functionally, an accessory protein needed during the final step in the assembly of 30S ribosomal subunit, possibly for assembly of the head region. Essential for efficient processing of 16S rRNA. May be needed both before and after RbfA during the maturation of 16S rRNA. It has affinity for free ribosomal 30S subunits but not for 70S ribosomes. The polypeptide is Ribosome maturation factor RimM (Enterobacter sp. (strain 638)).